A 95-amino-acid chain; its full sequence is Small ribosomal subunit protein bS6 (95 aa).

It belongs to the bacterial ribosomal protein bS6 family.

In terms of biological role, binds together with bS18 to 16S ribosomal RNA. The polypeptide is Small ribosomal subunit protein bS6 (rpsF) (Halalkalibacterium halodurans (strain ATCC BAA-125 / DSM 18197 / FERM 7344 / JCM 9153 / C-125) (Bacillus halodurans)).